A 394-amino-acid polypeptide reads, in one-letter code: Elongation factor Tu, mitochondrial (394 aa).

A tr-type G domain is found at K10–E204. The G1 stretch occupies residues G19–T26. G19 to T26 lines the GTP pocket. The interval G60 to S64 is G2. Positions D81–G84 are G3. Residues D81 to H85 and N136 to D139 each bind GTP. The segment at N136–D139 is G4. A G5 region spans residues S174–L176.

This sequence belongs to the TRAFAC class translation factor GTPase superfamily. Classic translation factor GTPase family. EF-Tu/EF-1A subfamily.

It localises to the mitochondrion. Functionally, this protein promotes the GTP-dependent binding of aminoacyl-tRNA to the A-site of ribosomes during protein biosynthesis. The chain is Elongation factor Tu, mitochondrial (TUFA) from Reclinomonas americana.